The sequence spans 389 residues: Glutamate 5-kinase (389 aa).

Lys-16 contacts ATP. Positions 56, 143, and 155 each coordinate substrate. An ATP-binding site is contributed by 175 to 176 (SD). In terms of domain architecture, PUA spans 281-358 (AGELHVDDGA…AEIETILGYP (78 aa)).

It belongs to the glutamate 5-kinase family.

It localises to the cytoplasm. It catalyses the reaction L-glutamate + ATP = L-glutamyl 5-phosphate + ADP. It functions in the pathway amino-acid biosynthesis; L-proline biosynthesis; L-glutamate 5-semialdehyde from L-glutamate: step 1/2. In terms of biological role, catalyzes the transfer of a phosphate group to glutamate to form L-glutamate 5-phosphate. This Rhizobium johnstonii (strain DSM 114642 / LMG 32736 / 3841) (Rhizobium leguminosarum bv. viciae) protein is Glutamate 5-kinase.